We begin with the raw amino-acid sequence, 303 residues long: Aspartate carbamoyltransferase catalytic subunit (303 aa).

Residues Arg49 and Thr50 each coordinate carbamoyl phosphate. Residue Lys77 coordinates L-aspartate. Carbamoyl phosphate is bound by residues Arg99, His126, and Gln129. L-aspartate-binding residues include Arg159 and Arg211. Carbamoyl phosphate contacts are provided by Ser252 and Pro253.

Belongs to the aspartate/ornithine carbamoyltransferase superfamily. ATCase family. Heterododecamer (2C3:3R2) of six catalytic PyrB chains organized as two trimers (C3), and six regulatory PyrI chains organized as three dimers (R2).

It carries out the reaction carbamoyl phosphate + L-aspartate = N-carbamoyl-L-aspartate + phosphate + H(+). The protein operates within pyrimidine metabolism; UMP biosynthesis via de novo pathway; (S)-dihydroorotate from bicarbonate: step 2/3. Catalyzes the condensation of carbamoyl phosphate and aspartate to form carbamoyl aspartate and inorganic phosphate, the committed step in the de novo pyrimidine nucleotide biosynthesis pathway. This Listeria monocytogenes serovar 1/2a (strain ATCC BAA-679 / EGD-e) protein is Aspartate carbamoyltransferase catalytic subunit.